We begin with the raw amino-acid sequence, 440 residues long: COP9 signalosome complex subunit 5 (440 aa).

The MPN domain occupies 71 to 218 (VLISKLSCEK…MGAFRTIESK (148 aa)). Zn(2+) is bound by residues His-164, His-166, and Asp-177. The JAMM motif motif lies at 164–177 (HSHPGYDCWLSNID). Residues 319 to 341 (TQRGDSTETSSFGSMFSGDNTSD) are compositionally biased toward polar residues. 2 disordered regions span residues 319 to 343 (TQRGDSTETSSFGSMFSGDNTSDVD) and 375 to 399 (SSRSTDNFHNSKKRMNSNQERCHDE).

The protein belongs to the peptidase M67A family. CSN5 subfamily. In terms of assembly, component of a COP9 signalosome-like (CSN) complex, composed of at least RRI1/CSN5, CSN9, RRI2/CSN10, PCI8/CSN11, CSN12 and CSI1. Within this complex it probably interacts directly with CSN12. Also interacts with RPN5. A divalent metal cation is required as a cofactor.

It localises to the cytoplasm. Its subcellular location is the nucleus. Functionally, catalytic component of the COP9 signalosome (CSN) complex that acts as an regulator of the ubiquitin (Ubl) conjugation pathway by mediating the deneddylation of the cullin subunit of SCF-type E3 ubiquitin-protein ligase complexes. The CSN complex is involved in the regulation of the mating pheromone response. The polypeptide is COP9 signalosome complex subunit 5 (RRI1) (Saccharomyces cerevisiae (strain ATCC 204508 / S288c) (Baker's yeast)).